The following is a 674-amino-acid chain: NADH-ubiquinone oxidoreductase chain 5 (674 aa).

17 consecutive transmembrane segments (helical) span residues 27–47, 81–101, 113–133, 135–155, 173–193, 200–220, 242–262, 275–295, 301–323, 325–345, 363–383, 410–430, 453–473, 514–534, 556–576, 616–636, and 639–659; these read GAHI…IVAF, LTVS…IFSV, FFAY…GDNY, IMFV…NFWF, VGDM…GNLD, IAPF…LLAA, TPVS…YLLL, LIVI…TGLL, RVIA…LSQY, VALF…LAAG, LIGF…SLIA, VAYW…LRLI, TIVM…GYVA, AIGT…LPVF, YVDV…GYVI, ALYL…PVLL, and ALIN…IPYI.

It belongs to the complex I subunit 5 family.

The protein localises to the mitochondrion inner membrane. It carries out the reaction a ubiquinone + NADH + 5 H(+)(in) = a ubiquinol + NAD(+) + 4 H(+)(out). Functionally, core subunit of the mitochondrial membrane respiratory chain NADH dehydrogenase (Complex I) that is believed to belong to the minimal assembly required for catalysis. Complex I functions in the transfer of electrons from NADH to the respiratory chain. The immediate electron acceptor for the enzyme is believed to be ubiquinone. The protein is NADH-ubiquinone oxidoreductase chain 5 (ND5) of Mycosarcoma maydis (Corn smut fungus).